The chain runs to 563 residues: Arginine--tRNA ligase (563 aa).

The 'HIGH' region motif lies at Pro121 to His131.

It belongs to the class-I aminoacyl-tRNA synthetase family. In terms of assembly, monomer.

It is found in the cytoplasm. It catalyses the reaction tRNA(Arg) + L-arginine + ATP = L-arginyl-tRNA(Arg) + AMP + diphosphate. In Leuconostoc mesenteroides subsp. mesenteroides (strain ATCC 8293 / DSM 20343 / BCRC 11652 / CCM 1803 / JCM 6124 / NCDO 523 / NBRC 100496 / NCIMB 8023 / NCTC 12954 / NRRL B-1118 / 37Y), this protein is Arginine--tRNA ligase.